Consider the following 122-residue polypeptide: Small ribosomal subunit protein uS13 (122 aa).

Residues valine 98–lysine 122 are disordered.

This sequence belongs to the universal ribosomal protein uS13 family. As to quaternary structure, part of the 30S ribosomal subunit. Forms a loose heterodimer with protein S19. Forms two bridges to the 50S subunit in the 70S ribosome.

Its function is as follows. Located at the top of the head of the 30S subunit, it contacts several helices of the 16S rRNA. In the 70S ribosome it contacts the 23S rRNA (bridge B1a) and protein L5 of the 50S subunit (bridge B1b), connecting the 2 subunits; these bridges are implicated in subunit movement. Contacts the tRNAs in the A and P-sites. This chain is Small ribosomal subunit protein uS13, found in Ruegeria pomeroyi (strain ATCC 700808 / DSM 15171 / DSS-3) (Silicibacter pomeroyi).